Consider the following 410-residue polypeptide: Tryptophan synthase beta chain (410 aa).

N6-(pyridoxal phosphate)lysine is present on lysine 98.

It belongs to the TrpB family. Tetramer of two alpha and two beta chains. It depends on pyridoxal 5'-phosphate as a cofactor.

It carries out the reaction (1S,2R)-1-C-(indol-3-yl)glycerol 3-phosphate + L-serine = D-glyceraldehyde 3-phosphate + L-tryptophan + H2O. It participates in amino-acid biosynthesis; L-tryptophan biosynthesis; L-tryptophan from chorismate: step 5/5. Its function is as follows. The beta subunit is responsible for the synthesis of L-tryptophan from indole and L-serine. The chain is Tryptophan synthase beta chain from Dinoroseobacter shibae (strain DSM 16493 / NCIMB 14021 / DFL 12).